A 710-amino-acid chain; its full sequence is Phosphoribosylformylglycinamidine synthase subunit PurL (710 aa).

His36 is an active-site residue. Positions 39 and 80 each coordinate ATP. Glu82 is a binding site for Mg(2+). Substrate is bound by residues 83 to 86 (SHNH) and Arg105. Residue His84 is the Proton acceptor of the active site. Residue Asp106 coordinates Mg(2+). Gln226 lines the substrate pocket. Residue Asp252 coordinates Mg(2+). 294–296 (ETQ) lines the substrate pocket. ATP is bound by residues Asp470 and Gly507. Ser510 serves as a coordination point for substrate.

It belongs to the FGAMS family. As to quaternary structure, monomer. Part of the FGAM synthase complex composed of 1 PurL, 1 PurQ and 2 PurS subunits.

It is found in the cytoplasm. The catalysed reaction is N(2)-formyl-N(1)-(5-phospho-beta-D-ribosyl)glycinamide + L-glutamine + ATP + H2O = 2-formamido-N(1)-(5-O-phospho-beta-D-ribosyl)acetamidine + L-glutamate + ADP + phosphate + H(+). The protein operates within purine metabolism; IMP biosynthesis via de novo pathway; 5-amino-1-(5-phospho-D-ribosyl)imidazole from N(2)-formyl-N(1)-(5-phospho-D-ribosyl)glycinamide: step 1/2. Functionally, part of the phosphoribosylformylglycinamidine synthase complex involved in the purines biosynthetic pathway. Catalyzes the ATP-dependent conversion of formylglycinamide ribonucleotide (FGAR) and glutamine to yield formylglycinamidine ribonucleotide (FGAM) and glutamate. The FGAM synthase complex is composed of three subunits. PurQ produces an ammonia molecule by converting glutamine to glutamate. PurL transfers the ammonia molecule to FGAR to form FGAM in an ATP-dependent manner. PurS interacts with PurQ and PurL and is thought to assist in the transfer of the ammonia molecule from PurQ to PurL. The sequence is that of Phosphoribosylformylglycinamidine synthase subunit PurL from Sulfolobus acidocaldarius (strain ATCC 33909 / DSM 639 / JCM 8929 / NBRC 15157 / NCIMB 11770).